Consider the following 228-residue polypeptide: Urease accessory protein UreF 1 (228 aa).

Belongs to the UreF family. In terms of assembly, ureD, UreF and UreG form a complex that acts as a GTP-hydrolysis-dependent molecular chaperone, activating the urease apoprotein by helping to assemble the nickel containing metallocenter of UreC. The UreE protein probably delivers the nickel.

It is found in the cytoplasm. Required for maturation of urease via the functional incorporation of the urease nickel metallocenter. This chain is Urease accessory protein UreF 1, found in Brucella canis (strain ATCC 23365 / NCTC 10854 / RM-666).